The sequence spans 933 residues: Protein translocase subunit SecA (933 aa).

ATP contacts are provided by residues Gln87, 105 to 109 (GEGKT), and Asp515. Disordered regions lie at residues 567–588 (ESRR…PGSS), 840–861 (DVEA…RHAA), and 880–933 (AAAE…CGKL). Over residues 845-856 (EEQRRQEAERMQ) the composition is skewed to basic and acidic residues. Residues 880-897 (AAAEGDSAPTGGAQQQSA) are compositionally biased toward low complexity. Residues 905–914 (VAREGPKVGR) show a composition bias toward basic and acidic residues. Zn(2+) contacts are provided by Cys918, Cys920, Cys929, and Cys930. Basic residues predominate over residues 924 to 933 (KKYKHCCGKL).

It belongs to the SecA family. As to quaternary structure, monomer and homodimer. Part of the essential Sec protein translocation apparatus which comprises SecA, SecYEG and auxiliary proteins SecDF-YajC and YidC. It depends on Zn(2+) as a cofactor.

It localises to the cell inner membrane. The protein localises to the cytoplasm. It carries out the reaction ATP + H2O + cellular proteinSide 1 = ADP + phosphate + cellular proteinSide 2.. In terms of biological role, part of the Sec protein translocase complex. Interacts with the SecYEG preprotein conducting channel. Has a central role in coupling the hydrolysis of ATP to the transfer of proteins into and across the cell membrane, serving both as a receptor for the preprotein-SecB complex and as an ATP-driven molecular motor driving the stepwise translocation of polypeptide chains across the membrane. This is Protein translocase subunit SecA from Halorhodospira halophila (strain DSM 244 / SL1) (Ectothiorhodospira halophila (strain DSM 244 / SL1)).